The primary structure comprises 643 residues: Enzymatic polyprotein (643 aa).

Positions 6 to 209 (NPNATFITVK…KEVNVPNNIP (204 aa)) constitute a Peptidase A3A domain. The active-site For protease activity is D26. In terms of domain architecture, Reverse transcriptase spans 226–410 (VRKGIIEESK…QTIDFLGLTL (185 aa)). Residues D296, D360, and D361 each contribute to the Mg(2+) site.

It belongs to the caulimoviridae enzymatic polyprotein family.

It carries out the reaction DNA(n) + a 2'-deoxyribonucleoside 5'-triphosphate = DNA(n+1) + diphosphate. Its function is as follows. Encodes for at least two polypeptides: protease (PR) and reverse transcriptase (RT). The protease processes the polyprotein in cis. Reverse transcriptase is multifunctional enzyme that converts the viral RNA genome into dsDNA in viral cytoplasmic capsids. This enzyme displays a DNA polymerase activity that can copy either DNA or RNA templates, and a ribonuclease H (RNase H) activity that cleaves the RNA strand of RNA-DNA heteroduplexes in a partially processive 3'- to 5'-endonucleasic mode. Neo-synthesized pregenomic RNA (pgRNA) are encapsidated, and reverse-transcribed inside the nucleocapsid. Partial (+)DNA is synthesized from the (-)DNA template and generates the relaxed circular DNA (RC-DNA) genome. After budding and infection, the RC-DNA migrates in the nucleus, and is converted into a plasmid-like covalently closed circular DNA (cccDNA). The chain is Enzymatic polyprotein from Cestrum parqui (CmYLCV).